Consider the following 170-residue polypeptide: Small ribosomal subunit protein uS5 (170 aa).

An S5 DRBM domain is found at 16 to 79; that stretch reads IEDQLVAINR…EAGKKNMISV (64 aa).

It belongs to the universal ribosomal protein uS5 family. As to quaternary structure, part of the 30S ribosomal subunit. Contacts proteins S4 and S8.

In terms of biological role, with S4 and S12 plays an important role in translational accuracy. Located at the back of the 30S subunit body where it stabilizes the conformation of the head with respect to the body. The chain is Small ribosomal subunit protein uS5 from Lactobacillus delbrueckii subsp. bulgaricus (strain ATCC 11842 / DSM 20081 / BCRC 10696 / JCM 1002 / NBRC 13953 / NCIMB 11778 / NCTC 12712 / WDCM 00102 / Lb 14).